The following is a 369-amino-acid chain: Anhydro-N-acetylmuramic acid kinase (369 aa).

12–19 contacts ATP; that stretch reads GTSMDGVD.

It belongs to the anhydro-N-acetylmuramic acid kinase family.

The catalysed reaction is 1,6-anhydro-N-acetyl-beta-muramate + ATP + H2O = N-acetyl-D-muramate 6-phosphate + ADP + H(+). The protein operates within amino-sugar metabolism; 1,6-anhydro-N-acetylmuramate degradation. Its pathway is cell wall biogenesis; peptidoglycan recycling. Its function is as follows. Catalyzes the specific phosphorylation of 1,6-anhydro-N-acetylmuramic acid (anhMurNAc) with the simultaneous cleavage of the 1,6-anhydro ring, generating MurNAc-6-P. Is required for the utilization of anhMurNAc either imported from the medium or derived from its own cell wall murein, and thus plays a role in cell wall recycling. The chain is Anhydro-N-acetylmuramic acid kinase from Shewanella sp. (strain W3-18-1).